The following is a 577-amino-acid chain: Eukaryotic translation initiation factor 3 subunit D (577 aa).

The disordered stretch occupies residues 103 to 177; the sequence is DSTKTRFGRG…KDYDKPQRNR (75 aa). Residues 166 to 177 show a composition bias toward basic and acidic residues; that stretch reads GWKDYDKPQRNR. Positions 305-319 are RNA gate; that stretch reads TLDMVTVNENAADAP. The segment at 558 to 577 is disordered; the sequence is GSFEDDGEGDVIEENVEEED. Positions 560–577 are enriched in acidic residues; it reads FEDDGEGDVIEENVEEED.

It belongs to the eIF-3 subunit D family. In terms of assembly, component of the eukaryotic translation initiation factor 3 (eIF-3) complex.

Its subcellular location is the cytoplasm. Its function is as follows. mRNA cap-binding component of the eukaryotic translation initiation factor 3 (eIF-3) complex, which is involved in protein synthesis of a specialized repertoire of mRNAs and, together with other initiation factors, stimulates binding of mRNA and methionyl-tRNAi to the 40S ribosome. The eIF-3 complex specifically targets and initiates translation of a subset of mRNAs involved in cell proliferation. In the eIF-3 complex, eif3d specifically recognizes and binds the 7-methylguanosine cap of a subset of mRNAs. This chain is Eukaryotic translation initiation factor 3 subunit D, found in Sclerotinia sclerotiorum (strain ATCC 18683 / 1980 / Ss-1) (White mold).